A 349-amino-acid chain; its full sequence is Merozoite surface protein P38 (349 aa).

An N-terminal signal peptide occupies residues 1–21 (MKRWSIITGIVIIFCILTCKG). 6-Cys domains are found at residues 22–149 (QVEN…ISNG) and 153–301 (KIPG…YLTN). 4 cysteine pairs are disulfide-bonded: Cys77/Cys127, Cys157/Cys183, Cys197/Cys278, and Cys208/Cys276. Residues Asn294, Asn295, and Asn301 are each glycosylated (N-linked (GlcNAc...) asparagine). A lipid anchor (GPI-anchor amidated asparagine) is attached at Asn315. The propeptide at 316–349 (SEIFERIEREEISFAFSSYLSITLILLYLFFLNF) is removed in mature form.

Its subcellular location is the cell surface. The protein localises to the cell membrane. In Plasmodium falciparum (isolate 3D7), this protein is Merozoite surface protein P38 (PFS38).